Reading from the N-terminus, the 608-residue chain is MADAWDIKSLKTKRNTLREKLEKRKKERIEILSDIQEDLTNPKKELVEADLEVQKEVLQALSSCSLALPIVSTQVVEKIAGSSLEMVNFILGKLANQGAIVIRNVTIGTEAGCEIISVQPKELKEILEDTNDTCQQKEEEAKRKLEVDDVDQPQEKTIKLESTVARKESTSLDAPDDIMMLLSMPSTREKQSKQVGEEILELLTKPTAKERSVAEKFKSHGGAQVMEFCSHGTKVECLKAQQATAEMAAKKKQERRDEKELRPDVDAGENVTGKVPKTESAAEDGEIIAEVINNCEAESQESTDGSDTCSSETTDKCTKLHFKKIIQAHTDESLGDCSFLNTCFHMATCKYVHYEVDTLPHINTNKPTDVKTKLSLKRSVDSSCTLYPPQWIQCDLRFLDMTVLGKFAVVMADPPWDIHMELPYGTMSDDEMRALGVPALQDDGLIFLWVTGRAMELGRDCLKLWGYERVDELIWVKTNQLQRIIRTGRTGHWLNHGKEHCLVGMKGNPTNLNRGLDCDVIVAEVRATSHKPDEIYGIIERLSPGTRKIELFGRPHNIQPNWITLGNQLDGIRLVDPELITQFQKRYPDGNCMSPASANAASINGIQK.

Residues 250-265 (KKKQERRDEKELRPDV) are compositionally biased toward basic and acidic residues. A disordered region spans residues 250–272 (KKKQERRDEKELRPDVDAGENVT). S-adenosyl-L-methionine is bound by residues 395-396 (DL) and D413. Residues 414–428 (PPWDIHMELPYGTMS) are gate loop 1. An interphase loop region spans residues 480 to 497 (QLQRIIRTGRTGHWLNHG). Residues 483 to 496 (RIIRTGRTGHWLNH) are positively charged region required for RNA-binding. The interval 525-533 (VRATSHKPD) is gate loop 2. Residues K531, 554–557 (RPHN), and 567–568 (NQ) contribute to the S-adenosyl-L-methionine site.

It belongs to the MT-A70-like family. As to quaternary structure, component of the WMM complex, a N6-methyltransferase complex composed of a catalytic subcomplex, named MAC, and of an associated subcomplex, named MACOM. The MAC subcomplex is composed of Ime4/Mettl3 and Mettl14. The MACOM subcomplex is composed of fl(2)d, Flacc/Xio, Hakai, vir, and, in some cases of nito. In terms of tissue distribution, expressed in testes. In the ovaries, detected in germaria, prefollicle, follicle and polar cells (at protein levels). Detected in the ooplasm and in the cells of the 16-cell cyst of early stages (at protein levels).

It localises to the nucleus. It carries out the reaction an adenosine in mRNA + S-adenosyl-L-methionine = an N(6)-methyladenosine in mRNA + S-adenosyl-L-homocysteine + H(+). Its function is as follows. Catalytic component of the WMM complex, a complex that mediates N6-methyladenosine (m6A) methylation of mRNAs, a modification that plays a role in the efficiency of mRNA splicing and is required for sex determination. In the heterodimer formed with Mettl14, constitutes the catalytic core. Required for sex determination and dosage compensation via Sxl alternative splicing: m6A methylation acts as a key regulator of Sxl pre-mRNA and promotes female-specific alternative splicing of Sxl, which determines female physiognomy. M6A methylation is also required for neuronal functions. During oogenesis, required for egg chamber development probably as part of the N/Notch signaling. The chain is N(6)-adenosine-methyltransferase MT-A70-like protein from Drosophila melanogaster (Fruit fly).